Here is a 240-residue protein sequence, read N- to C-terminus: Triosephosphate isomerase (240 aa).

Residue 6–8 participates in substrate binding; that stretch reads NLK. The active-site Electrophile is His88. Glu157 acts as the Proton acceptor in catalysis. Residues Gly163 and Ser193 each contribute to the substrate site.

This sequence belongs to the triosephosphate isomerase family. As to quaternary structure, homodimer.

The protein resides in the cytoplasm. It carries out the reaction D-glyceraldehyde 3-phosphate = dihydroxyacetone phosphate. It functions in the pathway carbohydrate biosynthesis; gluconeogenesis. It participates in carbohydrate degradation; glycolysis; D-glyceraldehyde 3-phosphate from glycerone phosphate: step 1/1. Functionally, involved in the gluconeogenesis. Catalyzes stereospecifically the conversion of dihydroxyacetone phosphate (DHAP) to D-glyceraldehyde-3-phosphate (G3P). The chain is Triosephosphate isomerase from Sulfurimonas denitrificans (strain ATCC 33889 / DSM 1251) (Thiomicrospira denitrificans (strain ATCC 33889 / DSM 1251)).